Consider the following 77-residue polypeptide: U11-lycotoxin-Ls1d (77 aa).

An N-terminal signal peptide occupies residues 1-20; sequence MKLIIFTGLVLFAIVSLIEA. Positions 21–26 are excised as a propeptide; sequence EEESGR.

The protein belongs to the neurotoxin 19 (CSTX) family. 10 (U11-Lctx) subfamily. Contains 4 disulfide bonds. Expressed by the venom gland.

Its subcellular location is the secreted. This chain is U11-lycotoxin-Ls1d, found in Lycosa singoriensis (Wolf spider).